Here is a 348-residue protein sequence, read N- to C-terminus: 3'-dehydrocarminate deglycosidase alpha subunit (348 aa).

A Mg(2+)-binding site is contributed by Glu-145. His-147 functions as the Proton acceptor in the catalytic mechanism. Residues Asp-177, His-275, and Glu-311 each coordinate Mg(2+).

It belongs to the C-glycoside deglycosidase alpha subunit family. In terms of assembly, heterodimer composed of an alpha subunit (CarB) and a beta subunit (CarC). Mg(2+) is required as a cofactor.

It catalyses the reaction 3'-dehydrocarminate + H(+) = kermesate + 1,5-anhydro-D-erythro-hex-1-en-3-ulose. Activity is strongly reduced in the presence of chelating agents. In terms of biological role, carbon-carbon bond-cleaving enzyme which participates in a carminate degradation pathway. Cleaves the C-C bond in 3'-dehydrocarminate to form kermesate. Also shows weak activity with other C-glycosides, such as 3''-dehydropuerarin (3''-oxo-puerarin), 3''-dehydroisoorientin (3''-oxo-homoorientin) and 3'-dehydromangiferin (3'-oxo-mangiferin). This Microbacterium sp protein is 3'-dehydrocarminate deglycosidase alpha subunit.